Here is a 183-residue protein sequence, read N- to C-terminus: Large ribosomal subunit protein uL5 (183 aa).

This sequence belongs to the universal ribosomal protein uL5 family. In terms of assembly, part of the 50S ribosomal subunit; part of the 5S rRNA/L5/L18/L25 subcomplex. Contacts the 5S rRNA and the P site tRNA. Forms a bridge to the 30S subunit in the 70S ribosome.

Functionally, this is one of the proteins that bind and probably mediate the attachment of the 5S RNA into the large ribosomal subunit, where it forms part of the central protuberance. In the 70S ribosome it contacts protein S13 of the 30S subunit (bridge B1b), connecting the 2 subunits; this bridge is implicated in subunit movement. Contacts the P site tRNA; the 5S rRNA and some of its associated proteins might help stabilize positioning of ribosome-bound tRNAs. The chain is Large ribosomal subunit protein uL5 from Fusobacterium nucleatum subsp. nucleatum (strain ATCC 25586 / DSM 15643 / BCRC 10681 / CIP 101130 / JCM 8532 / KCTC 2640 / LMG 13131 / VPI 4355).